The chain runs to 1413 residues: Alpha-latrocrustotoxin-Lt1a (1413 aa).

The propeptide occupies 1–28 (VSIFIFHFSANILVRNSEMKGKRVISKR). The helix H8 is the probable transmembrane region of the tetrameric pore inserted in the target cell membrane stretch occupies residues 238–257 (ALFALFYGTQTFISIMFYLV). ANK repeat units lie at residues 457 to 490 (DIHRDLYNAAQMPYKETALGICRKLIDSGAQVGA), 494 to 524 (MGRKSIHASATAGNDDVARLLLAKNNGLLNV), 528 to 557 (NGYTPLHIASERKNNDFVKFLLEKGADVNV), 562 to 592 (NELTPLHLAARQDFTIIVKTLMEKRGIDVNA), 596 to 625 (AGFTPLHLSITSNSRAARTLINETPAGINI), 629 to 658 (SGLTPLHLAVLQNNLSAAKVLVKSNKKVKL), 664 to 694 (NGMTPLHYASMLGNLEFVKYFTSEQGIDVNA), 699 to 729 (KNWTPLHLAILFKKFDVAQSLLQVRNIDIST), 733 to 762 (QAITPLHLAAATGNSQIVKTILNSGAVVDQ), 766 to 795 (NGFTALHLAIMNPNTETPQFLIAKGANINA), 799 to 828 (DGSTPLHFAAALGKTNIFQLLMDKGANIKA), 832 to 861 (INQMPIHEAVVNGHLAIVKMLIEQDSSLMN), 866 to 895 (RDEYPFYLAAEKRYKDVFNYLESKGADVNE), 899 to 928 (DGNTLLHLFSINGEVEVVQFLIQNGADFRL), 965 to 995 (RGKTILYHAICDSVKYDRIEVVRYFVETLNE), 996 to 1026 (DQCSPLQEAAAYAHLDLVKYFVQERGINPTA), 1031 to 1072 (NQVS…DINK), 1077 to 1106 (QQSTPVSSAVYGNKVSILNYLIRNGADPNK), 1109 to 1139 (RGDPPLFIAAMIGQYDIVKSLVEQHKIDVNT), and 1143 to 1172 (EQFTPLHAAASNDHIDVVKYLIQKGADVNA). Positions 1193 to 1413 (RSLGRRFFRN…NRPTNVLQIK (221 aa)) are excised as a propeptide.

Belongs to the cationic peptide 01 (latrotoxin) family. 01 (alpha-latrocrustotoxin) subfamily. Homotetramer in membranes. As to expression, expressed by the venom gland.

The protein resides in the secreted. Its subcellular location is the target cell membrane. In terms of biological role, crustacean-selective presynaptic neurotoxin that induces neurotransmitter exocytosis. May bind to crustacean neurexin-1 homolog, adhesion G protein-coupled receptor L1 homolog, and receptor-type tyrosine-protein phosphatase S homolog, and induces neurotransmitter exocytosis both by forming tetrameric pores in membranes and signaling via G protein-coupled receptor. This recombinant protein form channels in artificial membrane bilayers, that are stabilized by calcium ions and allow calcium flux at negative membrane potentials. The chain is Alpha-latrocrustotoxin-Lt1a from Latrodectus tredecimguttatus (Mediterranean black widow spider).